Reading from the N-terminus, the 197-residue chain is Large ribosomal subunit protein uL18 (197 aa).

The protein belongs to the universal ribosomal protein uL18 family. In terms of assembly, part of the 50S ribosomal subunit. Contacts the 5S and 23S rRNAs.

Its function is as follows. This is one of the proteins that bind and probably mediate the attachment of the 5S RNA into the large ribosomal subunit, where it forms part of the central protuberance. This Sulfolobus acidocaldarius (strain ATCC 33909 / DSM 639 / JCM 8929 / NBRC 15157 / NCIMB 11770) protein is Large ribosomal subunit protein uL18.